A 545-amino-acid chain; its full sequence is Serine/threonine-protein kinase PAK 1 (545 aa).

A disordered region spans residues 1–77 (MSNNGLDIQD…KEKERPEISL (77 aa)). At serine 2 the chain carries N-acetylserine. Phosphoserine; by PKB and autocatalysis is present on serine 21. The residue at position 57 (serine 57) is a Phosphoserine; by autocatalysis. Basic and acidic residues predominate over residues 68 to 77 (KEKERPEISL). An autoregulatory region region spans residues 70 to 140 (KERPEISLPS…YNSKKTSNSQ (71 aa)). The CRIB domain occupies 75-88 (ISLPSDFEHTIHVG). The segment at 75 to 105 (ISLPSDFEHTIHVGFDAVTGEFTGMPEQWAR) is GTPase-binding. Threonine 84 is subject to Phosphothreonine; by OXSR1. Serine 115 is modified (phosphoserine). Phosphotyrosine is present on residues tyrosine 131 and tyrosine 142. At serine 144 the chain carries Phosphoserine; by autocatalysis. Serine 149 is subject to Phosphoserine. The residue at position 153 (tyrosine 153) is a Phosphotyrosine; by JAK2. The segment at 159 to 198 (LNVKAVSETPAVPPVSEDEDDDDDDATPPPVIAPRPEHTK) is disordered. Serine 174 is subject to Phosphoserine. A compositionally biased stretch (acidic residues) spans 174–184 (SEDEDDDDDDA). Phosphothreonine is present on threonine 185. Serine 199 is modified (phosphoserine; by autocatalysis). Position 201 is a phosphotyrosine; by JAK2 (tyrosine 201). Phosphoserine is present on serine 204. Positions 211 to 251 (VTPTRDVATSPISPTENNTTPPDALTRNTEKQKKKPKMSDE) are disordered. Threonine 212 and threonine 219 each carry phosphothreonine. Serine 220 and serine 223 each carry phosphoserine. Residues 220-231 (SPISPTENNTTP) are compositionally biased toward polar residues. A phosphothreonine mark is found at threonine 225, threonine 229, and threonine 230. Residues 270–521 (YTRFEKIGQG…AKELLQHQFL (252 aa)) form the Protein kinase domain. 276–284 (IGQGASGTV) is a binding site for ATP. Residue tyrosine 285 is modified to Phosphotyrosine; by JAK2. ATP is bound by residues lysine 299 and 345-347 (EYL). Aspartate 389 acts as the Proton acceptor in catalysis. Threonine 423 bears the Phosphothreonine; by autocatalysis, BRSK2 and PDPK1 mark.

This sequence belongs to the protein kinase superfamily. STE Ser/Thr protein kinase family. STE20 subfamily. Homodimer; homodimerization results in autoinhibition. Active as monomer. Interacts with GIT1. Component of cytoplasmic complexes, which also contains PXN, ARHGEF7 and GIT1. Interacts with NISCH. Interacts with DVL1; mediates the formation of a DVL1, MUSK and PAK1 ternary complex involved in AChR clustering. Binds to the caspase-cleaved p110 isoform of CDC2L1 and CDC2L2, p110C, but not the full-length proteins. Interacts with ARHGEF7. Interacts tightly with GTP-bound but not GDP-bound CDC42/P21 and RAC1. Interacts with SCRIB. Interacts with PDPK1. Interacts (via kinase domain) with RAF1. Interacts with NCK1 and NCK2. Interacts with TBCB. Interacts with BRSK2. Interacts with SNAI1. Interacts with CIB1 isoform 2. Interacts with CIB1 (via N-terminal region); the interaction is direct, promotes PAK1 activity and occurs in a calcium-dependent manner. Interacts with INPP5K. Interacts with gamma-tubulin. Interacts with RHOU; the interaction promotes PAK1 activation. Requires Mg(2+) as cofactor. Autophosphorylated in trans, meaning that in a dimer, one kinase molecule phosphorylates the other one. Activated by autophosphorylation at Thr-423 in response to a conformation change, triggered by interaction with GTP-bound CDC42 or RAC1. Activated by phosphorylation at Thr-423 by BRSK2 and by PDPK1. Phosphorylated by JAK2 in response to PRL; this increases PAK1 kinase activity. Phosphorylated at Ser-21 by PKB/AKT; this reduces interaction with NCK1 and association with focal adhesion sites. Upon DNA damage, phosphorylated at Thr-212 and translocates to the nucleoplasm. Phosphorylated at tyrosine residues, which can be enhanced by NTN1. In terms of tissue distribution, overexpressed in gastric cancer cells and tissues (at protein level).

It localises to the cytoplasm. The protein resides in the cell junction. Its subcellular location is the focal adhesion. The protein localises to the cell projection. It is found in the lamellipodium. It localises to the cell membrane. The protein resides in the ruffle membrane. Its subcellular location is the invadopodium. The protein localises to the nucleus. It is found in the nucleoplasm. It localises to the chromosome. The protein resides in the cytoskeleton. Its subcellular location is the microtubule organizing center. The protein localises to the centrosome. It catalyses the reaction L-seryl-[protein] + ATP = O-phospho-L-seryl-[protein] + ADP + H(+). The catalysed reaction is L-threonyl-[protein] + ATP = O-phospho-L-threonyl-[protein] + ADP + H(+). Activated by binding small G proteins. Binding of GTP-bound CDC42 or RAC1 to the autoregulatory region releases monomers from the autoinhibited dimer, and enables activation by phosphorylation of Thr-423. Phosphorylation of Thr-84 by OXSR1 inhibits activation. Protein kinase involved in intracellular signaling pathways downstream of integrins and receptor-type kinases that plays an important role in cytoskeleton dynamics, in cell adhesion, migration, proliferation, apoptosis, mitosis, and in vesicle-mediated transport processes. Can directly phosphorylate BAD and protects cells against apoptosis. Activated by interaction with CDC42 and RAC1. Functions as a GTPase effector that links the Rho-related GTPases CDC42 and RAC1 to the JNK MAP kinase pathway. Phosphorylates and activates MAP2K1, and thereby mediates activation of downstream MAP kinases. Involved in the reorganization of the actin cytoskeleton, actin stress fibers and of focal adhesion complexes. Phosphorylates the tubulin chaperone TBCB and thereby plays a role in the regulation of microtubule biogenesis and organization of the tubulin cytoskeleton. Plays a role in the regulation of insulin secretion in response to elevated glucose levels. Part of a ternary complex that contains PAK1, DVL1 and MUSK that is important for MUSK-dependent regulation of AChR clustering during the formation of the neuromuscular junction (NMJ). Activity is inhibited in cells undergoing apoptosis, potentially due to binding of CDC2L1 and CDC2L2. Phosphorylates MYL9/MLC2. Phosphorylates RAF1 at 'Ser-338' and 'Ser-339' resulting in: activation of RAF1, stimulation of RAF1 translocation to mitochondria, phosphorylation of BAD by RAF1, and RAF1 binding to BCL2. Phosphorylates SNAI1 at 'Ser-246' promoting its transcriptional repressor activity by increasing its accumulation in the nucleus. In podocytes, promotes NR3C2 nuclear localization. Required for atypical chemokine receptor ACKR2-induced phosphorylation of LIMK1 and cofilin (CFL1) and for the up-regulation of ACKR2 from endosomal compartment to cell membrane, increasing its efficiency in chemokine uptake and degradation. In synapses, seems to mediate the regulation of F-actin cluster formation performed by SHANK3, maybe through CFL1 phosphorylation and inactivation. Plays a role in RUFY3-mediated facilitating gastric cancer cells migration and invasion. In response to DNA damage, phosphorylates MORC2 which activates its ATPase activity and facilitates chromatin remodeling. In neurons, plays a crucial role in regulating GABA(A) receptor synaptic stability and hence GABAergic inhibitory synaptic transmission through its role in F-actin stabilization. In hippocampal neurons, necessary for the formation of dendritic spines and excitatory synapses; this function is dependent on kinase activity and may be exerted by the regulation of actomyosin contractility through the phosphorylation of myosin II regulatory light chain (MLC). Along with GIT1, positively regulates microtubule nucleation during interphase. Phosphorylates FXR1, promoting its localization to stress granules and activity. Phosphorylates ILK on 'Thr-173' and 'Ser-246', promoting nuclear export of ILK. In Homo sapiens (Human), this protein is Serine/threonine-protein kinase PAK 1.